The primary structure comprises 82 residues: Large ribosomal subunit protein bL31 (82 aa).

Zn(2+)-binding residues include C16, C18, C37, and C40.

The protein belongs to the bacterial ribosomal protein bL31 family. Type A subfamily. Part of the 50S ribosomal subunit. The cofactor is Zn(2+).

Functionally, binds the 23S rRNA. The polypeptide is Large ribosomal subunit protein bL31 (Blochmanniella pennsylvanica (strain BPEN)).